The following is a 150-amino-acid chain: Large ribosomal subunit protein bL9 (150 aa).

The protein belongs to the bacterial ribosomal protein bL9 family.

Its function is as follows. Binds to the 23S rRNA. The polypeptide is Large ribosomal subunit protein bL9 (Polynucleobacter asymbioticus (strain DSM 18221 / CIP 109841 / QLW-P1DMWA-1) (Polynucleobacter necessarius subsp. asymbioticus)).